Reading from the N-terminus, the 906-residue chain is Glutamate receptor 1 (906 aa).

The N-terminal stretch at 1–18 (MQHIFAFFCTGFLGAVVG) is a signal peptide. The Extracellular segment spans residues 19–536 (ANFPNNIQIG…GVFSFLDPLA (518 aa)). 6 N-linked (GlcNAc...) asparagine glycosylation sites follow: asparagine 63, asparagine 249, asparagine 257, asparagine 363, asparagine 401, and asparagine 406. Residues cysteine 75 and cysteine 323 are joined by a disulfide bond. Positions 492, 494, and 499 each coordinate L-glutamate. The chain crosses the membrane as a helical span at residues 537–557 (YEIWMCIVFAYIGVSVVLFLV). The Cytoplasmic portion of the chain corresponds to 558 to 584 (SRFSPYEWHSEEFEEGRDQTTSDQSNE). Residues 585–600 (FGIFNSLWFSLGAFMQ) constitute an intramembrane region (helical; Pore-forming). Residues 601 to 603 (QGC) lie within the membrane without spanning it. A lipid anchor (S-palmitoyl cysteine) is attached at cysteine 603. Over 604–609 (DISPRS) the chain is Cytoplasmic. A helical transmembrane segment spans residues 610 to 630 (LSGRIVGGVWWFFTLIIISSY). The Extracellular segment spans residues 631 to 805 (TANLAAFLTV…DKTSALSLSN (175 aa)). Position 645 is a phosphoserine (serine 645). 2 residues coordinate L-glutamate: serine 668 and threonine 669. The residue at position 710 (serine 710) is a Phosphoserine. Glutamate 719 is a binding site for L-glutamate. A disulfide bridge connects residues cysteine 732 and cysteine 787. The chain crosses the membrane as a helical span at residues 806 to 826 (VAGVFYILIGGLGLAMLVALI). Residues 827–906 (EFCYKSRSES…SGMPLGATGL (80 aa)) lie on the Cytoplasmic side of the membrane. Cysteine 829 is lipidated: S-palmitoyl cysteine. 2 positions are modified to phosphoserine: serine 849 and serine 863. The interval 861–880 (RNSGAGASSAGSGENGRVVS) is disordered. Positions 863-872 (SGAGASSAGS) are enriched in low complexity. Positions 903–906 (ATGL) match the PDZ-binding motif.

It belongs to the glutamate-gated ion channel (TC 1.A.10.1) family. GRIA1 subfamily. In terms of assembly, homotetramer or heterotetramer of pore-forming glutamate receptor subunits; heteromeric assembly can be the result of both receptor subtype and flip-flop forms and according the composition, one partner can be dominant with respect to the fast desensitizing current component, whereas the other can determine the steady-state component. Tetramers may be formed by the dimerization of dimers. Found in a complex with GRIA2, GRIA3, GRIA4, CNIH2, CNIH3, CACNG2, CACNG3, CACNG4, CACNG5, CACNG7 and CACNG8. Interacts with HIP1 and RASGRF2. Interacts with SYNDIG1 and GRIA2. Interacts with DLG1 (via C-terminus). Interacts with LRFN1. Interacts with PRKG2. Interacts with CNIH2 and CACNG2. Interacts with CACNG5; this interaction modulates the gating. Interacts (via C-terminus) with PDLIM4 (via LIM domain); this interaction as well as the interaction of PDLIM4 with alpha-actinin is required for their colocalization in early endosomes. Interacts with SNX27 (via PDZ domain); the interaction is required for recycling to the plasma membrane when endocytosed and prevent degradation in lysosomes. Interacts (via PDZ-binding motif) with SHANK3 (via PDZ domain). Interacts with CACNG3; associates GRIA1 with the adapter protein complex 4 (AP-4) to target GRIA1 to the somatodendritic compartment of neurons. Interacts with CACNG2; this interaction mediates traffick to the plasma membrane and modulation of desensitization. Interaction with CNIH2 and CNIH3; this interaction promotes expression at the plasma membrane and extensively modulates their gating properties by slowing deactivation and desensitization kinetics. Found in a complex with GRIA2, GRIA3, GRIA4, DLG4, CACNG8 and CNIH2. In terms of processing, phosphorylated at Ser-645. Phosphorylated at Ser-710 by PKC. Phosphorylated at Ser-849 by PKC, PKA and CAMK2. Phosphorylated at Ser-863 by PKC, PKA and PRKG2. Phosphorylation of Ser-863 is reduced by induction of long-term depression and increased by induction of long-term potentiation. Palmitoylated. Depalmitoylated by CPT1C and upon L-glutamate stimulation. ZDHHC3/GODZ specifically palmitoylates Cys-603, which leads to Golgi retention and decreased cell surface expression. In contrast, Cys-829 palmitoylation does not affect cell surface expression but regulates stimulation-dependent endocytosis.

The protein resides in the cell membrane. It localises to the endoplasmic reticulum membrane. The protein localises to the postsynaptic cell membrane. Its subcellular location is the postsynaptic density membrane. It is found in the cell projection. The protein resides in the dendrite. It localises to the dendritic spine. The protein localises to the early endosome membrane. Its subcellular location is the recycling endosome membrane. It is found in the presynapse. The protein resides in the synapse. It carries out the reaction Ca(2+)(in) = Ca(2+)(out). The catalysed reaction is Na(+)(in) = Na(+)(out). It catalyses the reaction Mg(2+)(in) = Mg(2+)(out). The enzyme catalyses Li(+)(in) = Li(+)(out). It carries out the reaction K(+)(in) = K(+)(out). The catalysed reaction is Sr(2+)(in) = Sr(2+)(out). Its function is as follows. Ionotropic glutamate receptor that functions as a ligand-gated cation channel, gated by L-glutamate and glutamatergic agonists such as alpha-amino-3-hydroxy-5-methyl-4-isoxazolepropionic acid (AMPA), quisqualic acid, and kainic acid. L-glutamate acts as an excitatory neurotransmitter at many synapses in the central nervous system. Binding of the excitatory neurotransmitter L-glutamate induces a conformation change, leading to the opening of the cation channel, and thereby converts the chemical signal to an electrical impulse upon entry of monovalent and divalent cations such as sodium and calcium. The receptor then desensitizes rapidly and enters in a transient inactive state, characterized by the presence of bound agonist. In the presence of CACNG2 or CACNG4 or CACNG7 or CACNG8, shows resensitization which is characterized by a delayed accumulation of current flux upon continued application of L-glutamate. Calcium (Ca(2+)) permeability depends on subunits composition and, heteromeric channels containing edited GRIA2 subunit are calcium-impermeable. Also permeable to other divalents cations such as strontium(2+) and magnesium(2+) and monovalent cations such as potassium(1+) and lithium(1+). This Macaca fascicularis (Crab-eating macaque) protein is Glutamate receptor 1.